The primary structure comprises 310 residues: Putative S-adenosyl-L-methionine-dependent methyltransferase MSMEG_1888/MSMEI_1848 (310 aa).

S-adenosyl-L-methionine-binding positions include aspartate 128 and 157–158; that span reads DL.

This sequence belongs to the UPF0677 family.

Functionally, exhibits S-adenosyl-L-methionine-dependent methyltransferase activity. The sequence is that of Putative S-adenosyl-L-methionine-dependent methyltransferase MSMEG_1888/MSMEI_1848 from Mycolicibacterium smegmatis (strain ATCC 700084 / mc(2)155) (Mycobacterium smegmatis).